Here is a 345-residue protein sequence, read N- to C-terminus: MDTVERTDLVARFTEEVIERDEIETLFEEQDEPTAYIGYAPTGEMHIGHFTTMRKLADFIDAGLDVTVLVADLHAHLDDAKSPFELLEARSEYYERAIEGMIAAAGADPDGISFIRGTDFQLDEPYTLDLYRLLADTTLSRAQRAGSEVVRQSENPSLGSLVYTLMQALDVAALDADIAYGGIDQRGIYMLAREQLPDHGYDKPACVFAPLLSGLSGGKMSASEAGSKINLTDDGEAIDEKIGGAYCPAGETEENGVLEYLEYLVFPVFDQRDTSFVVERPEKYGGDLEYGTYDELEADFVSGELHPADLKPAAAAAIDEVVAPVRELLLEDPELLASAYPERYE.

An L-tyrosine-binding site is contributed by tyrosine 36. The 'HIGH' region signature appears at 41–49 (PTGEMHIGH). L-tyrosine contacts are provided by tyrosine 163, glutamine 167, aspartate 170, and glutamine 185.

The protein belongs to the class-I aminoacyl-tRNA synthetase family. TyrS type 3 subfamily. In terms of assembly, homodimer.

It is found in the cytoplasm. It catalyses the reaction tRNA(Tyr) + L-tyrosine + ATP = L-tyrosyl-tRNA(Tyr) + AMP + diphosphate + H(+). Catalyzes the attachment of tyrosine to tRNA(Tyr) in a two-step reaction: tyrosine is first activated by ATP to form Tyr-AMP and then transferred to the acceptor end of tRNA(Tyr). The polypeptide is Tyrosine--tRNA ligase (Natronomonas pharaonis (strain ATCC 35678 / DSM 2160 / CIP 103997 / JCM 8858 / NBRC 14720 / NCIMB 2260 / Gabara) (Halobacterium pharaonis)).